A 232-amino-acid chain; its full sequence is Oxidoreductase 1 (232 aa).

This sequence belongs to the MQO family. The cofactor is FAD.

Oxidoreductase; part of the gene cluster that mediates the biosynthesis of elsinochromes, pigments consisting of at least four interconvertible tautomers (A, B, C and D) that have a core phenolic quinone to which various side chains are attached and which play an important role in fungal pathogenesis. The non-reducing polyketide synthase PKS1 was proposed to iteratively catalyze decarboxylation between acetyl-CoA and malonyl-CoA subunits for polyketide chain elongation. The released polyketide undergoes cyclization to form an aromatic ring, and proceeds via serial modification steps to produce the heptaketide back- bone of elsinochrome. As elsinochrome has a symmetrical structure, two identical heptaketides are fused to form a core 1,2-dihydrobenzo-perylene ring structure, which can then be successively modified to produce the various derivatives of elsinochrome. Some of these reactions may be cooperatively carried out, at least in part, by the products of RDT1, OXR1 and PKS1. PRF1, embedded within the elsinochrome cluster possibly functions to stabilize some of the biosynthetic enzymes required for elsinochrome production. As prefoldin is a hexamer containing 2 a and 4 b subunits, additional prefoldin subunits, whose coding genes may not immediately link to the elsinochrome biosynthetic gene cluster, are required to fulfill the chaperone function. In addition, no methyltransferase-coding gene exists within the biosynthetic gene cluster, even though elsinochrome has four methyl groups at positions C3, C7, C8 and C12. Apparently, the identified gene cluster does not contain the entire entourage of genes responsible for elsinochrome biosynthesis. Once elsinochrome is synthesized, it must be exported outside the fungal cells, which is probably accomplished by the ECT1 transporter, to avoid toxicity. This Elsinoe fawcettii (Citrus scab fungus) protein is Oxidoreductase 1.